A 293-amino-acid polypeptide reads, in one-letter code: Taste receptor type 2 member 143 (293 aa).

At 1–6 the chain is on the extracellular side; sequence MPSTPT. The helical transmembrane segment at 7–27 threads the bilayer; it reads LIFIIIFYLVSLASMLQNGFM. Residues 28-55 are Cytoplasmic-facing; sequence MIVLGREWMRNRTLPAADMIVASLASSR. The chain crosses the membrane as a helical span at residues 56–76; that stretch reads FCLHGIAILANLLASFDFCYQ. Residues 77–79 lie on the Extracellular side of the membrane; it reads ANL. Residues 80–100 traverse the membrane as a helical segment; it reads IGILWDFTNTLIFWLTAWLAI. Over 101 to 127 the chain is Cytoplasmic; it reads FYCVKISSFSHPVLFWLKWRISQLVPR. Residues 128–148 traverse the membrane as a helical segment; that stretch reads LLVVSLIIGGLSAVISATGNF. At 149-181 the chain is on the extracellular side; the sequence is MANQMTISQGFHGNCTFGHMSLDFYRYYYLYHS. Asn-162 carries N-linked (GlcNAc...) asparagine glycosylation. The helical transmembrane segment at 182–202 threads the bilayer; sequence VLMWFTPFFLFLVSVIVLMFS. The Cytoplasmic segment spans residues 203–227; it reads LYQHVEKMRGHRPGPWDLHTQAHTM. Residues 228-248 traverse the membrane as a helical segment; that stretch reads ALKSLTFFFIFYIFFFLALVI. Residues 249–264 lie on the Extracellular side of the membrane; sequence SSTKRKSMQSYYWARE. Residues 265–285 form a helical membrane-spanning segment; the sequence is AIIYTGIFLNSIILLFSNPKL. Residues 286-293 are Cytoplasmic-facing; that stretch reads RKALKMRF.

It belongs to the G-protein coupled receptor T2R family.

The protein localises to the membrane. Functionally, putative taste receptor which may play a role in the perception of bitterness. This is Taste receptor type 2 member 143 (Tas2r143) from Mus musculus (Mouse).